The following is a 169-amino-acid chain: UPF0065 protein in clcB-clcD intergenic region (169 aa).

It belongs to the UPF0065 (bug) family.

It localises to the periplasm. The protein is UPF0065 protein in clcB-clcD intergenic region of Pseudomonas knackmussii (strain DSM 6978 / CCUG 54928 / LMG 23759 / B13).